The chain runs to 338 residues: Inorganic pyrophosphatase (338 aa).

Arginine 129 lines the diphosphate pocket. Aspartate 166, aspartate 171, and aspartate 203 together coordinate Mg(2+).

It belongs to the PPase family. Component of the NURF complex composed of Caf1-55, E(bx), Nurf-38 and Iswi. It depends on Mg(2+) as a cofactor.

Its subcellular location is the cytoplasm. It localises to the nucleus. It catalyses the reaction diphosphate + H2O = 2 phosphate + H(+). In terms of biological role, component of NURF (nucleosome remodeling factor), a complex which catalyzes ATP-dependent nucleosome sliding and facilitates transcription of chromatin. NURF is required for homeotic gene expression, proper larval blood cell development, normal male X chromosome morphology, ecdysteroid signaling and metamorphosis. Inorganic pyrophosphatase (PPase), hydrolyzes inorganic pyrophosphate to inorganic phosphate, essential for driving critical biosynthetic reactions including transcription, replication, and DNA repair. In Drosophila melanogaster (Fruit fly), this protein is Inorganic pyrophosphatase (Nurf-38).